The primary structure comprises 176 residues: Sperm-egg fusion protein TMEM95 (176 aa).

A signal peptide spans M1–A16. Intrachain disulfides connect C17-C118, C20-C121, C105-C128, and C109-C134. At C17 to K145 the chain is on the extracellular side. The helical transmembrane segment at I146–E166 threads the bilayer. Topologically, residues S167 to L176 are cytoplasmic.

This sequence belongs to the TMEM95 family. In terms of assembly, does not interact with sperm-egg fusion proteins IZUMO1 or IZUMO1R/JUNO. In terms of processing, N-glycosylated. In terms of tissue distribution, spermatozoa (at protein level).

It is found in the cytoplasmic vesicle. Its subcellular location is the secretory vesicle. The protein localises to the acrosome membrane. Its function is as follows. Sperm protein required for fusion of sperm with the egg membrane during fertilization. This is Sperm-egg fusion protein TMEM95 from Homo sapiens (Human).